The following is a 235-amino-acid chain: Octanoyltransferase (235 aa).

The BPL/LPL catalytic domain maps to 52-229 (KNRQASMIFC…SICSALEYIN (178 aa)). Substrate-binding positions include 89 to 96 (RGGKITWH), 159 to 161 (AIG), and 172 to 174 (GFA). Cysteine 190 (acyl-thioester intermediate) is an active-site residue.

It belongs to the LipB family.

It is found in the cytoplasm. The enzyme catalyses octanoyl-[ACP] + L-lysyl-[protein] = N(6)-octanoyl-L-lysyl-[protein] + holo-[ACP] + H(+). It participates in protein modification; protein lipoylation via endogenous pathway; protein N(6)-(lipoyl)lysine from octanoyl-[acyl-carrier-protein]: step 1/2. In terms of biological role, catalyzes the transfer of endogenously produced octanoic acid from octanoyl-acyl-carrier-protein onto the lipoyl domains of lipoate-dependent enzymes. Lipoyl-ACP can also act as a substrate although octanoyl-ACP is likely to be the physiological substrate. The protein is Octanoyltransferase of Tropheryma whipplei (strain Twist) (Whipple's bacillus).